The chain runs to 178 residues: Bifunctional protein PyrR (178 aa).

Substrate-binding positions include 42–43, Arg83, 103–111, Arg136, and Val160; these read TR and DDVIYKGRT. Positions 99–111 match the PRPP-binding motif; sequence VVLVDDVIYKGRT.

It belongs to the purine/pyrimidine phosphoribosyltransferase family. PyrR subfamily.

The catalysed reaction is UMP + diphosphate = 5-phospho-alpha-D-ribose 1-diphosphate + uracil. Its function is as follows. Regulates the transcription of the pyrimidine nucleotide (pyr) operon in response to exogenous pyrimidines. Also displays a weak uracil phosphoribosyltransferase activity which is not physiologically significant. The chain is Bifunctional protein PyrR from Synechocystis sp. (strain ATCC 27184 / PCC 6803 / Kazusa).